Consider the following 127-residue polypeptide: Aspartate 1-decarboxylase (127 aa).

Serine 25 functions as the Schiff-base intermediate with substrate; via pyruvic acid in the catalytic mechanism. Serine 25 carries the post-translational modification Pyruvic acid (Ser). Threonine 57 provides a ligand contact to substrate. Tyrosine 58 (proton donor) is an active-site residue. Glycine 73–alanine 75 provides a ligand contact to substrate.

It belongs to the PanD family. In terms of assembly, heterooctamer of four alpha and four beta subunits. Pyruvate is required as a cofactor. Is synthesized initially as an inactive proenzyme, which is activated by self-cleavage at a specific serine bond to produce a beta-subunit with a hydroxyl group at its C-terminus and an alpha-subunit with a pyruvoyl group at its N-terminus.

Its subcellular location is the cytoplasm. It catalyses the reaction L-aspartate + H(+) = beta-alanine + CO2. It participates in cofactor biosynthesis; (R)-pantothenate biosynthesis; beta-alanine from L-aspartate: step 1/1. Functionally, catalyzes the pyruvoyl-dependent decarboxylation of aspartate to produce beta-alanine. The polypeptide is Aspartate 1-decarboxylase (Staphylococcus aureus (strain MSSA476)).